We begin with the raw amino-acid sequence, 246 residues long: Metallo-beta-lactamase IMP-1 (246 aa).

Residues 1-18 form the signal peptide; that stretch reads MSKLSVFFIFLFCSIATA. Residues His95, His97, Asp99, His157, and Cys176 each coordinate Zn(2+). The a beta-lactam site is built by Lys179 and Asn185. A Zn(2+)-binding site is contributed by His215.

Belongs to the metallo-beta-lactamase superfamily. Class-B beta-lactamase family. Monomer. The cofactor is Zn(2+).

Its subcellular location is the periplasm. The enzyme catalyses a beta-lactam + H2O = a substituted beta-amino acid. Its activity is regulated as follows. Inhibited by captopril stereoisomers, Hg(2+), Fe(2+), Cu(2+), chelating agents such as EDTA, dansyl derivatives, including dansyl-C4SH, bisthiazolidines, mercaptoacetic acid and by PMPC phosphonates. Inhibited by 3-(3-mercaptopropionylsulfanyl)-propionic acid pentafluorophenyl ester, via a covalent binding to Lys-179. Not susceptible to inactivation by the beta-lactamase-blocking agents clavulanic acid or cloxacillin. Functionally, class B beta-lactamase which confers resistance to the beta-lactam antibiotics, including penicillins, cephalosporins and carbapenems. Acts via hydrolysis of the beta-lactam ring. Has penicillin-, cephalosporin- and carbapenem-hydrolyzing activities. Has endoribonuclease activity, cleaving substrate RNAs preferentially between U/C and A, in vitro. This chain is Metallo-beta-lactamase IMP-1, found in Serratia marcescens.